We begin with the raw amino-acid sequence, 54 residues long: Lectin alpha-1 chain (54 aa).

It belongs to the leguminous lectin family. In terms of assembly, tetramer of two alpha and two beta chains.

This chain is Lectin alpha-1 chain, found in Lathyrus cicera (Flat-pod pea).